Here is a 161-residue protein sequence, read N- to C-terminus: Vasotocin-neurophysin VT (161 aa).

The signal sequence occupies residues 1 to 19 (MAEPSLPLSFLCLLALSSA). A disulfide bond links Cys20 and Cys25. A Glycine amide modification is found at Gly28. Disulfide bonds link Cys41–Cys85, Cys44–Cys58, Cys52–Cys75, Cys59–Cys65, Cys92–Cys104, Cys98–Cys116, and Cys105–Cys110.

The protein belongs to the vasopressin/oxytocin family. Seven disulfide bonds are present in neurophysin.

It is found in the secreted. Functionally, vasotocin is an antidiuretic hormone. This Gallus gallus (Chicken) protein is Vasotocin-neurophysin VT.